We begin with the raw amino-acid sequence, 344 residues long: MPQAYENAGVSVEAGYEVVKRIKSHVARTNRPGVVSGIGGFGGLFDLASLGYNEPVLISGTDGVGTKLVIAKLMDKHDTIGIDCVAMCVNDVVAQGAQPLFFLDYIACGKNDPAVLEQVVSGVADGCVQAGAALIGGETAEMPGMYDEDEYDLAGFTVGCVERSKIVDGSTIEAGDVLIGLPSTGVHSNGFSLVRKALFEQAGYTVHTRLPELDDRELGDVLLTPTKIYVKALMPLFEANLVRGVAHITGGGFIENVPRMLPEGLAASIELGSWPVPPIFDVIEKAGDVDHMEMYNIFNMGLGMVVAIRPDRVDEAMNLLEHAGEKAYRVGHVIEQVNERVDLA.

Belongs to the AIR synthase family.

Its subcellular location is the cytoplasm. It catalyses the reaction 2-formamido-N(1)-(5-O-phospho-beta-D-ribosyl)acetamidine + ATP = 5-amino-1-(5-phospho-beta-D-ribosyl)imidazole + ADP + phosphate + H(+). Its pathway is purine metabolism; IMP biosynthesis via de novo pathway; 5-amino-1-(5-phospho-D-ribosyl)imidazole from N(2)-formyl-N(1)-(5-phospho-D-ribosyl)glycinamide: step 2/2. The protein is Phosphoribosylformylglycinamidine cyclo-ligase of Bifidobacterium animalis subsp. lactis (strain AD011).